The chain runs to 363 residues: Melanoma-associated antigen B16 (363 aa).

The disordered stretch occupies residues 33–124 (EPCSSPHLMA…PDQSDSTDLP (92 aa)). Over residues 82 to 97 (ASTSSDLQHPYDSSSE) the composition is skewed to low complexity. In terms of domain architecture, MAGE spans 128 to 327 (VDGKVDFLVN…TVFLSQYEEA (200 aa)). Positions 342 to 363 (HADSSSTSGESSSDTSSNFSQV) are disordered.

In Mus musculus (Mouse), this protein is Melanoma-associated antigen B16 (Mageb16).